Here is a 499-residue protein sequence, read N- to C-terminus: Aspartyl/glutamyl-tRNA(Asn/Gln) amidotransferase subunit B (499 aa).

It belongs to the GatB/GatE family. GatB subfamily. In terms of assembly, heterotrimer of A, B and C subunits.

It catalyses the reaction L-glutamyl-tRNA(Gln) + L-glutamine + ATP + H2O = L-glutaminyl-tRNA(Gln) + L-glutamate + ADP + phosphate + H(+). The catalysed reaction is L-aspartyl-tRNA(Asn) + L-glutamine + ATP + H2O = L-asparaginyl-tRNA(Asn) + L-glutamate + ADP + phosphate + 2 H(+). Allows the formation of correctly charged Asn-tRNA(Asn) or Gln-tRNA(Gln) through the transamidation of misacylated Asp-tRNA(Asn) or Glu-tRNA(Gln) in organisms which lack either or both of asparaginyl-tRNA or glutaminyl-tRNA synthetases. The reaction takes place in the presence of glutamine and ATP through an activated phospho-Asp-tRNA(Asn) or phospho-Glu-tRNA(Gln). The chain is Aspartyl/glutamyl-tRNA(Asn/Gln) amidotransferase subunit B from Bartonella quintana (strain Toulouse) (Rochalimaea quintana).